Reading from the N-terminus, the 520-residue chain is Fusaridione A cluster transcription factor fsdR (520 aa).

Residues 1–30 (MSTGPPSGISLVSMTTPRKSGQHTPESWSK) are disordered.

It is found in the nucleus. Functionally, transcription factor that regulates the expression of the gene cluster that mediates the biosynthesis of fusaridione A. The polypeptide is Fusaridione A cluster transcription factor fsdR (Fusarium heterosporum).